Consider the following 451-residue polypeptide: UPF0210 protein NMCC_1554 (451 aa).

Belongs to the UPF0210 family. As to quaternary structure, homodimer.

The protein is UPF0210 protein NMCC_1554 of Neisseria meningitidis serogroup C (strain 053442).